Here is a 29-residue protein sequence, read N- to C-terminus: NADP phosphatase 1 (29 aa).

Homodimer.

The protein localises to the cytoplasm. This is NADP phosphatase 1 from Arthrobacter sp. (strain KM).